The primary structure comprises 368 residues: Quinolinate synthase (368 aa).

Residues H46 and S63 each coordinate iminosuccinate. Position 110 (C110) interacts with [4Fe-4S] cluster. Iminosuccinate is bound by residues 141 to 143 (YVN) and S162. Position 230 (C230) interacts with [4Fe-4S] cluster. Iminosuccinate-binding positions include 256–258 (HPE) and T273. [4Fe-4S] cluster is bound at residue C320.

The protein belongs to the quinolinate synthase family. Type 3 subfamily. It depends on [4Fe-4S] cluster as a cofactor.

Its subcellular location is the cytoplasm. The catalysed reaction is iminosuccinate + dihydroxyacetone phosphate = quinolinate + phosphate + 2 H2O + H(+). Its pathway is cofactor biosynthesis; NAD(+) biosynthesis; quinolinate from iminoaspartate: step 1/1. Functionally, catalyzes the condensation of iminoaspartate with dihydroxyacetone phosphate to form quinolinate. The sequence is that of Quinolinate synthase from Bacillus thuringiensis (strain Al Hakam).